The following is a 545-amino-acid chain: Glucose-6-phosphate isomerase (545 aa).

Glutamate 351 serves as the catalytic Proton donor. Active-site residues include histidine 382 and lysine 510.

The protein belongs to the GPI family.

It localises to the cytoplasm. The enzyme catalyses alpha-D-glucose 6-phosphate = beta-D-fructose 6-phosphate. The protein operates within carbohydrate biosynthesis; gluconeogenesis. It participates in carbohydrate degradation; glycolysis; D-glyceraldehyde 3-phosphate and glycerone phosphate from D-glucose: step 2/4. Its function is as follows. Catalyzes the reversible isomerization of glucose-6-phosphate to fructose-6-phosphate. The polypeptide is Glucose-6-phosphate isomerase (Shewanella baltica (strain OS185)).